A 486-amino-acid polypeptide reads, in one-letter code: ATP-dependent 6-phosphofructokinase (486 aa).

ATP contacts are provided by residues glycine 105, 171–172, and 196–199; these read RG and GDGT. Position 197 (aspartate 197) interacts with Mg(2+). Substrate-binding positions include 225–227, 270–272, glutamate 323, and 378–381; these read TID, MGR, and YMIR. Aspartate 227 (proton acceptor) is an active-site residue. The Peroxisomal targeting signal motif lies at 484 to 486; sequence SKV.

The protein belongs to the phosphofructokinase type A (PFKA) family. PPi-dependent PFK group II subfamily. Atypical ATP-dependent clade 'X' sub-subfamily. In terms of assembly, homotetramer. Requires Mg(2+) as cofactor.

The protein resides in the glycosome. It carries out the reaction beta-D-fructose 6-phosphate + ATP = beta-D-fructose 1,6-bisphosphate + ADP + H(+). It participates in carbohydrate degradation; glycolysis; D-glyceraldehyde 3-phosphate and glycerone phosphate from D-glucose: step 3/4. With respect to regulation, allosterically activated by AMP. Its function is as follows. Catalyzes the phosphorylation of D-fructose 6-phosphate to fructose 1,6-bisphosphate by ATP, the first committing step of glycolysis. The sequence is that of ATP-dependent 6-phosphofructokinase from Leishmania donovani.